A 72-amino-acid polypeptide reads, in one-letter code: DNA-directed RNA polymerase subunit omega (72 aa).

This sequence belongs to the RNA polymerase subunit omega family. As to quaternary structure, the RNAP catalytic core consists of 2 alpha, 1 beta, 1 beta' and 1 omega subunit. When a sigma factor is associated with the core the holoenzyme is formed, which can initiate transcription.

The enzyme catalyses RNA(n) + a ribonucleoside 5'-triphosphate = RNA(n+1) + diphosphate. Its function is as follows. Promotes RNA polymerase assembly. Latches the N- and C-terminal regions of the beta' subunit thereby facilitating its interaction with the beta and alpha subunits. The chain is DNA-directed RNA polymerase subunit omega from Clostridium kluyveri (strain NBRC 12016).